The sequence spans 279 residues: Homeobox protein BarH-like 2 (279 aa).

Disordered stretches follow at residues 110–137 (APGG…RRSR) and 194–279 (KGGQ…PPLS). Residues 118–128 (SSESETEQPTP) show a composition bias toward polar residues. The homeobox DNA-binding region spans 133 to 192 (PRRSRTIFTELQLMGLEKKFQKQKYLSTPDRLDLAQSLGLTQLQVKTWYQNRRMKWKKMV). Over residues 225–240 (NSQAQGQEQLEPSQGQ) the composition is skewed to polar residues. The segment covering 261 to 279 (PPDPPQELPIPSSEPPPLS) has biased composition (pro residues).

This sequence belongs to the BAR homeobox family. Highly expressed in adult salivary gland and at much lower levels in mammary gland, kidney and placenta.

It is found in the nucleus. In terms of biological role, transcription factor. Binds optimally to the DNA consensus sequence 5'-YYTAATGRTTTTY-3'. May control the expression of neural adhesion molecules such as L1 or Ng-CAM during embryonic development of both the central and peripherical nervous system. May be involved in controlling adhesive processes in keratinizing epithelia. This is Homeobox protein BarH-like 2 (BARX2) from Homo sapiens (Human).